Consider the following 240-residue polypeptide: Uridylate kinase (240 aa).

12 to 15 (KLSG) is an ATP binding site. Glycine 54 provides a ligand contact to UMP. Residues glycine 55 and arginine 59 each contribute to the ATP site. UMP contacts are provided by residues aspartate 74 and 135–142 (TGNPFFTT). ATP-binding residues include threonine 162, tyrosine 168, and aspartate 171.

This sequence belongs to the UMP kinase family. In terms of assembly, homohexamer.

The protein localises to the cytoplasm. The enzyme catalyses UMP + ATP = UDP + ADP. It participates in pyrimidine metabolism; CTP biosynthesis via de novo pathway; UDP from UMP (UMPK route): step 1/1. Its activity is regulated as follows. Inhibited by UTP. Its function is as follows. Catalyzes the reversible phosphorylation of UMP to UDP. The protein is Uridylate kinase of Xanthomonas axonopodis pv. citri (strain 306).